The chain runs to 327 residues: Protoheme IX farnesyltransferase (327 aa).

8 helical membrane-spanning segments follow: residues 35-55, 60-80, 106-126, 129-149, 157-177, 185-205, 234-254, and 283-303; these read LIPLLLATTLGGMALSEGWPL, LVCTLGGGALASAAAGVLNCL, SAFIGAIACTLAAAMLLVSGV, LAAGLSLLGLCSYVLLYTALL, IVIGGVAGAIPPLVGAAAATG, WLFALVMVWTPAHFWALALLL, GWITVLLSSLGVFALPSGGAF, and AKALFRWSILYLFGVCLLLIL.

This sequence belongs to the UbiA prenyltransferase family. Protoheme IX farnesyltransferase subfamily.

It is found in the cell inner membrane. It carries out the reaction heme b + (2E,6E)-farnesyl diphosphate + H2O = Fe(II)-heme o + diphosphate. It functions in the pathway porphyrin-containing compound metabolism; heme O biosynthesis; heme O from protoheme: step 1/1. Converts heme B (protoheme IX) to heme O by substitution of the vinyl group on carbon 2 of heme B porphyrin ring with a hydroxyethyl farnesyl side group. This is Protoheme IX farnesyltransferase from Synechococcus sp. (strain CC9605).